A 416-amino-acid polypeptide reads, in one-letter code: Enterobactin exporter EntS (416 aa).

Topologically, residues 1–21 are cytoplasmic; sequence MNKQSWLLNLSLLKTHPAFRA. A helical membrane pass occupies residues 22–42; sequence VFLARFISIVSLGLLGVAVPV. At 43–55 the chain is on the periplasmic side; it reads QIQIMTHSTWQVG. A helical membrane pass occupies residues 56 to 76; sequence LSVTLTGGAMFVGLMVGGVLA. Residues 77–83 lie on the Cytoplasmic side of the membrane; sequence DRYERKK. A helical membrane pass occupies residues 84 to 104; sequence VILLARGTCGIGFIGLCLNAL. Topologically, residues 105–109 are periplasmic; sequence LPEPS. The chain crosses the membrane as a helical span at residues 110–130; sequence LLAIYLLGLWDGFFASLGVTA. Over 131-156 the chain is Cytoplasmic; the sequence is LLAATPALVGRENLMQAGAITMLTVR. The helical transmembrane segment at 157-177 threads the bilayer; it reads LGSVISPMIGGLLLATGGVAW. Asn178 is a topological domain (periplasmic). The chain crosses the membrane as a helical span at residues 179–199; that stretch reads YGLAAAGTFITLLPLLSLPAL. Over 200–218 the chain is Cytoplasmic; it reads PPPPQPREHPLKSLLAGFR. The helical transmembrane segment at 219–239 threads the bilayer; sequence FLLASPLVGGIALLGGLLTMA. The Periplasmic segment spans residues 240–256; it reads SAVRVLYPALADNWQMS. The chain crosses the membrane as a helical span at residues 257 to 277; the sequence is AAQIGFLYAAIPLGAAIGALT. The Cytoplasmic portion of the chain corresponds to 278–287; it reads SGKLAHSVRP. A helical membrane pass occupies residues 288-307; it reads GLLMLLSTLGAFLAIGLFGL. Residues 308–313 are Periplasmic-facing; it reads MPMWIL. A helical membrane pass occupies residues 314–336; that stretch reads GVVCLALFGWLSAVSSLLQYTML. Residues 337–356 are Cytoplasmic-facing; sequence QTQTPEAMLGRINGLWTAQN. Residues 357–377 form a helical membrane-spanning segment; sequence VTGDAIGAALLGGLGAMMTPV. Residue Ala378 is a topological domain, periplasmic. The chain crosses the membrane as a helical span at residues 379 to 399; sequence SASASGFGLLIIGVLLLLVLV. Residues 400 to 416 lie on the Cytoplasmic side of the membrane; sequence ELRRFRQTPPQVTASDS.

Belongs to the major facilitator superfamily. EntS (TC 2.A.1.38) family.

The protein localises to the cell inner membrane. Functionally, component of an export pathway for enterobactin. The protein is Enterobactin exporter EntS of Escherichia coli O127:H6 (strain E2348/69 / EPEC).